Reading from the N-terminus, the 277-residue chain is Probable redox regulatory protein ML2435 (277 aa).

The protein belongs to the Rv0495c family.

Its function is as follows. Essential for maintaining intracellular redox homeostasis. The protein is Probable redox regulatory protein ML2435 of Mycobacterium leprae (strain TN).